The sequence spans 800 residues: MQKAAPRPIIKRSYLNLDAIFGHVFSNLTGEPVTPTKIATFYLLRILFQTHFGFRHKRAYYKPFSPAEKERIFHWLYALMTSVVELSYKDFRIVTRLAFDDGREVCKNFYAAMEKIGAGMADVTLNVEDEFYTNKHPKDPKLPANDTVHEAMDLARGDIIQFSSNHSFMYRWMKRLLAQYTKSTPSEVFQINAAMKSWVLSAVESKYHPEFKGEYLPHFIDCSVRARDWVAKSIYFIQKNPRFAFQYNEMLHYTRIVQKRHPDVVEGFLLEAIVQVQLKDSSSAIKAMKSFFELSMFELNENMVHAAKTHRLAVPTQTPLMYAPILQARICRIFGDYQMARLLLHESLQQAQLRNDEICHQMANIEMHTVDILGCRALLEDNNEKTAKHIENERRVQRKALLHIDDLHGHTRSGPCCLSSEEDFELVAEMDSYGKMLMLMKIIAEGNYKLIYDRVAETGITCPVGNDLGERGRKVAAYGAALISSNMIHNGMYHQAKCAAENMLANNCRTDETDPFQAPFQAEPWAIGAVNLSYSQAGVGNYDAALRTIEEMRQNYPEELSWQSNRHVVICAAVINFERFLLKNDYKACASEVLNLAAHSELECKLRQALLLAAAGKERASVEVLEGLNVVDIRGRIRIHMQTGCIYTASQEFRKAAREFADALSLAENTTLKDIVPMVKRRQATMLMCHGQYVECLKLLKECNEGIEQFGSFTEKACYYMTAARCHRLLGKDPRMWLKKSRALVRNGQWPAFTKLVLSEIAALHDVKGLMPDENRLSQICEQFGKLTADCPGRCEWLLI.

Residues glutamate 346–glutamate 366 are a coiled coil. 2 TPR repeats span residues alanine 526–glutamate 559 and isoleucine 637–threonine 670.

As to quaternary structure, the APC/C complex is probably composed of at least 12 subunits: apc-2, apc-10, apc-11, cdc-26, emb-1, emb-27, emb-30, mat-1, mat-2, mat-3, such-1 and gfi-3. Expressed in gut cells and mature sperm stored in the spermatheca.

The protein operates within protein modification; protein ubiquitination. In terms of biological role, probable component of the anaphase promoting complex/cyclosome (APC/C), a cell cycle-regulated E3 ubiquitin ligase that controls progression through mitosis and the G1 phase of the cell cycle. The APC/C complex acts by mediating ubiquitination and subsequent degradation of target proteins. Required for the metaphase to anaphase transition in meiosis. The protein is Protein gfi-3 of Caenorhabditis elegans.